A 935-amino-acid polypeptide reads, in one-letter code: Phosphoenolpyruvate carboxylase (935 aa).

Residues His161 and Lys593 contribute to the active site.

Belongs to the PEPCase type 1 family. Requires Mg(2+) as cofactor.

It catalyses the reaction oxaloacetate + phosphate = phosphoenolpyruvate + hydrogencarbonate. In terms of biological role, forms oxaloacetate, a four-carbon dicarboxylic acid source for the tricarboxylic acid cycle. This Mycobacterium avium (strain 104) protein is Phosphoenolpyruvate carboxylase.